The following is a 226-amino-acid chain: ATP synthase subunit a (226 aa).

The next 6 membrane-spanning stretches (helical) occupy residues 18–38 (FITG…SLGA), 79–99 (LAGT…IPGF), 105–125 (SWSF…FEGI), 134–154 (FAHF…IEII), 179–199 (LIML…VLFF), and 201–221 (GILQ…GAVL).

The protein belongs to the ATPase A chain family. In terms of assembly, F-type ATPases have 2 components, CF(1) - the catalytic core - and CF(0) - the membrane proton channel. CF(1) has five subunits: alpha(3), beta(3), gamma(1), delta(1), epsilon(1). CF(0) has three main subunits: a(1), b(2) and c(9-12). The alpha and beta chains form an alternating ring which encloses part of the gamma chain. CF(1) is attached to CF(0) by a central stalk formed by the gamma and epsilon chains, while a peripheral stalk is formed by the delta and b chains.

Its subcellular location is the cell inner membrane. Its function is as follows. Key component of the proton channel; it plays a direct role in the translocation of protons across the membrane. The sequence is that of ATP synthase subunit a from Helicobacter pylori (strain J99 / ATCC 700824) (Campylobacter pylori J99).